Reading from the N-terminus, the 604-residue chain is Solute carrier family 23 member 1 (604 aa).

Residues 1–29 (MKAQEDPGSSKQHECPDSAGTSTRDQQAP) form a disordered region. At 1 to 59 (MKAQEDPGSSKQHECPDSAGTSTRDQQAPLPAEPKFDMLYKIEDVPPWYLCILLGFQHY) the chain is on the cytoplasmic side. The chain crosses the membrane as a helical span at residues 60–80 (LTCFSGTIAVPFLLAEALCVG). Residues 81 to 88 (RDQHMISQ) are Extracellular-facing. The helical transmembrane segment at 89 to 109 (LIGTIFTCVGITTLIQTTVGI) threads the bilayer. Arginine 110 is a topological domain (cytoplasmic). The helical transmembrane segment at 111–131 (LPLFQASAFAFLVPAKAILAL) threads the bilayer. Topologically, residues 132 to 166 (ERWKCPPEEEIYGNWSMPLNTSHIWHPRIREVQGA) are extracellular. Residues asparagine 145 and asparagine 151 are each glycosylated (N-linked (GlcNAc...) asparagine). The chain crosses the membrane as a helical span at residues 167–187 (IMVSSVVEVVIGLLGLPGALL). At 188–214 (SYIGPLTVTPTVSLIGLSVFQAAGDRA) the chain is on the cytoplasmic side. A helical membrane pass occupies residues 215–232 (GSHWGISACSILLIVLFS). Topologically, residues 233-236 (QYLR) are extracellular. An intramembrane region (helical) is located at residues 237–250 (NLTFLLPVYRWGKG). Residues 251-257 (LTLFRIQ) lie on the Extracellular side of the membrane. Residues 258–278 (IFKMFPIVLAIMTVWLLCYVL) traverse the membrane as a helical segment. The Cytoplasmic portion of the chain corresponds to 279–319 (TLTDVLPADPTVYGFQARTDARGDIMAISPWIRIPYPCQWG). Residues 320–340 (LPTVTVAAVLGMFSATLAGII) traverse the membrane as a helical segment. Over 341 to 365 (ESIGDYYACARLAGAPPPPVHAINR) the chain is Extracellular. The chain crosses the membrane as a helical span at residues 366 to 386 (GIFTEGVCCIIAGLLGTGNGS). Residues 387–409 (TSSSPNIGVLGITKVGSRRVVQY) lie on the Cytoplasmic side of the membrane. The chain crosses the membrane as a helical span at residues 410–430 (GAGIMLILGAIGKFTALFASL). At 431 to 433 (PDP) the chain is on the extracellular side. The chain crosses the membrane as a helical span at residues 434–454 (ILGGMFCTLFGMITAVGLSNL). Over 455-464 (QFVDMNSSRN) the chain is Cytoplasmic. A helical transmembrane segment spans residues 465–485 (LFVLGFSMFFGLTLPNYLDSN). Residues 486–497 (PGAINTGVPEVD) are Extracellular-facing. The chain crosses the membrane as a helical span at residues 498-518 (QILTVLLTTEMFVGGCLAFIL). Topologically, residues 519–604 (DNTVPGSPEE…TETGSVCTKV (86 aa)) are cytoplasmic. Threonine 597 carries the phosphothreonine modification. The residue at position 599 (serine 599) is a Phosphoserine. At threonine 602 the chain carries Phosphothreonine.

It belongs to the nucleobase:cation symporter-2 (NCS2) (TC 2.A.40) family. In terms of processing, phosphorylated. Highly expressed in the straight segment of proximal tubules in the kidney, in intestine and liver. Detected in epithelial cells of the bronchiole and epididymis.

The protein localises to the cell membrane. The enzyme catalyses L-ascorbate(out) + 2 Na(+)(out) = L-ascorbate(in) + 2 Na(+)(in). The catalysed reaction is urate(out) + 2 Na(+)(out) = urate(in) + 2 Na(+)(in). Sodium/ascorbate cotransporter. Mediates electrogenic uptake of vitamin C, with a stoichiometry of 2 Na(+) for each ascorbate. Has retained some ancestral activity toward nucleobases such as urate, an oxidized purine. Low-affinity high-capacity sodium:urate cotransporter, may regulate serum urate levels by serving as a renal urate re-absorber. The polypeptide is Solute carrier family 23 member 1 (Slc23a1) (Rattus norvegicus (Rat)).